We begin with the raw amino-acid sequence, 402 residues long: Deoxyguanosinetriphosphate triphosphohydrolase-like protein (402 aa).

One can recognise an HD domain in the interval 69–217 (RLTHSLEVAQ…AAIADDIAYD (149 aa)).

This sequence belongs to the dGTPase family. Type 2 subfamily.

This is Deoxyguanosinetriphosphate triphosphohydrolase-like protein from Bradyrhizobium diazoefficiens (strain JCM 10833 / BCRC 13528 / IAM 13628 / NBRC 14792 / USDA 110).